The following is a 347-amino-acid chain: N6-Methyl-AMP deaminase-L (347 aa).

Residues His-19 and His-21 each coordinate Zn(2+). N(6)-methyl-AMP contacts are provided by residues His-21, Asn-23, His-69, 101-104 (STPR), Asp-142, and Gly-175. His-202 contributes to the Zn(2+) binding site. N(6)-methyl-AMP-binding residues include Glu-205, Asp-283, and Asp-284. Glu-205 serves as the catalytic Proton donor. Asp-283 contacts Zn(2+).

It belongs to the metallo-dependent hydrolases superfamily. Adenosine and AMP deaminases family. Monomer. The cofactor is Zn(2+).

It catalyses the reaction N(6)-methyl-AMP + H2O + H(+) = IMP + methylamine. In terms of biological role, catalyzes the hydrolysis of the free cytosolic methylated adenosine nucleotide N(6)-methyl-AMP (N6-mAMP) to produce inositol monophosphate (IMP) and methylamine. Is required for the catabolism of cytosolic N6-mAMP, which is derived from the degradation of mRNA containing N6-methylated adenine (m6A). The polypeptide is N6-Methyl-AMP deaminase-L (mapda.L) (Xenopus laevis (African clawed frog)).